Here is a 111-residue protein sequence, read N- to C-terminus: MDDSREESQFIVDDVSKTIKEAIETTIGGNAYQHDKVNNWTGQVVENCLTVLTKEQKPYKYIVTAMIMQKNGAGLHTASSCYWNNDTDGSCTVRWENKTMYCIVSVFGLAV.

Belongs to the dynein light chain Tctex-type family. As to quaternary structure, the cytoplasmic dynein complex consists of two catalytic heavy chains (HCs) and a number of non-catalytic subunits presented by intermediate chains (ICs), light intermediate chains (LICs) and light chains (LCs).

The protein resides in the cytoplasm. Its subcellular location is the cytoskeleton. In terms of biological role, acts as one of several non-catalytic accessory components of the cytoplasmic dynein complex that are thought to be involved in linking dynein to cargos and to adapter proteins that regulate dynein function. Cytoplasmic dynein acts as a motor for the intracellular retrograde motility of vesicles and organelles along microtubules. Required for spermatid differentiation. Is not required for polarized transport in rhabdomere development and appears to be a non-essential component of the cytoplasmic dynein complex. The sequence is that of Dynein light chain Tctex-type (Dlc90F) from Drosophila melanogaster (Fruit fly).